The primary structure comprises 235 residues: Histidine/lysine/arginine/ornithine transport system permease protein HisM (235 aa).

Over 1-26 (MIEIIQEYWKSLLWTDGYRFTGVAIT) the chain is Periplasmic. The 199-residue stretch at 23–221 (VAITLWLLIS…LISYVLISLF (199 aa)) folds into the ABC transmembrane type-1 domain. A helical membrane pass occupies residues 27-47 (LWLLISSVVMGGLLAVILAVG). Over 48-58 (RVSSNKFIRFP) the chain is Cytoplasmic. A helical membrane pass occupies residues 59–79 (IWLFTYIFRGTPLYVQLLVFY). Over 80–104 (SGMYTLEIVKGTDLLNAFFRSGLNC) the chain is Periplasmic. A helical membrane pass occupies residues 105-125 (TVLALTLNTCAYTTEIFAGAI). Residues 126–157 (RSVPHGEIEAARAYGFSSFKMYRCIILPSALR) are Cytoplasmic-facing. The chain crosses the membrane as a helical span at residues 158–178 (IALPAYSNEVILMLHSTALAF). The Periplasmic portion of the chain corresponds to 179–199 (TATVPDLLKIARDINSATYQP). Residues 200 to 220 (FTAFGIAAVLYLLISYVLISL) traverse the membrane as a helical segment. Residues 221 to 235 (FRRAERRWLQHVSSK) are Cytoplasmic-facing.

Belongs to the binding-protein-dependent transport system permease family. HisMQ subfamily. The HisPMQJ complex is composed of two ATP-binding proteins (HisP), two transmembrane proteins (HisM and HisQ) and a solute-binding protein (HisJ). The HisPMQ-ArgT complex is composed of two ATP-binding proteins (HisP), two transmembrane proteins (HisM and HisQ) and a solute-binding protein (ArgT).

Its subcellular location is the cell inner membrane. In terms of biological role, part of the ABC transporter complex HisPMQJ involved in histidine transport. Is also part of the ABC transporter complex HisPMQ-ArgT involved in lysine/arginine/ornithine transport. Probably responsible for the translocation of the substrate across the membrane. In Salmonella typhi, this protein is Histidine/lysine/arginine/ornithine transport system permease protein HisM (hisM).